The sequence spans 185 residues: Prenylated Rab acceptor protein 1 (185 aa).

The Cytoplasmic segment spans residues 1–78 (MAAQKDQQKD…RNVEYYQSNY (78 aa)). The tract at residues 30–54 (AGREWLERRRATIRPWSTFVDQQRF) is required for interaction with prenylated RAB3A and VAMP2. The next 2 helical transmembrane spans lie at 79-94 (VFVFLGLILYCVVTSP) and 95-112 (MLLVALAVFFGACYILYL). The Cytoplasmic segment spans residues 113 to 131 (RTLESKLVLFGREVSPAHQ). 2 helical membrane passes run 132-148 (YALAGGISFPFFWLAGA) and 149-165 (GSAVFWVLGATLVVIGS). The interval 165–185 (SHAAFHQIEAVDGEELQMEPV) is required for interaction with GDI1. Residues 166-185 (HAAFHQIEAVDGEELQMEPV) are Cytoplasmic-facing. Residues 175 to 185 (VDGEELQMEPV) are required for interaction with prenylated RAB3A and VAMP2. Residues 175-185 (VDGEELQMEPV) are homodimerization.

Belongs to the PRA1 family. In terms of assembly, homodimer. Interacts with VAMP2 (synaptobrevin-2), GDI1, and PCLO. Interacts specifically with prenylated Rab proteins; strongly with RAB4B, RAB5A and RAB5C, and weakly with RAB4A, RAB6, RAB7A, RAB17 and RAB22. Interacts with NDRG1. As to expression, ubiquitous. Strongest expression found in placenta, pituitary gland, kidney, lung and stomach.

Its subcellular location is the cell membrane. It localises to the cytoplasm. The protein resides in the golgi apparatus. The protein localises to the cytoplasmic vesicle. It is found in the secretory vesicle. Its subcellular location is the synaptic vesicle. In terms of biological role, general Rab protein regulator required for vesicle formation from the Golgi complex. May control vesicle docking and fusion by mediating the action of Rab GTPases to the SNARE complexes. In addition it inhibits the removal of Rab GTPases from the membrane by GDI. The protein is Prenylated Rab acceptor protein 1 (RABAC1) of Homo sapiens (Human).